The sequence spans 529 residues: Peptide chain release factor 3 (529 aa).

The 270-residue stretch at Ala11–Met280 folds into the tr-type G domain. GTP contacts are provided by residues Ser20–Thr27, Asp88–His92, and Asn142–Asp145.

The protein belongs to the TRAFAC class translation factor GTPase superfamily. Classic translation factor GTPase family. PrfC subfamily.

The protein resides in the cytoplasm. Increases the formation of ribosomal termination complexes and stimulates activities of RF-1 and RF-2. It binds guanine nucleotides and has strong preference for UGA stop codons. It may interact directly with the ribosome. The stimulation of RF-1 and RF-2 is significantly reduced by GTP and GDP, but not by GMP. This Escherichia coli O8 (strain IAI1) protein is Peptide chain release factor 3.